A 480-amino-acid polypeptide reads, in one-letter code: Ochratoxinase (480 aa).

Positions 111, 113, 246, 287, and 307 each coordinate Zn(2+). Residue Lys246 is part of the active site. Asp378 is an active-site residue.

The protein belongs to the metallo-dependent hydrolases superfamily. Ochratoxinase amidase 2 family. In terms of assembly, homooctamer. The cofactor is Zn(2+).

It is found in the secreted. The catalysed reaction is ochratoxin A + H2O = ochratoxin alpha + L-phenylalanine. The Zn(2+)-specific chelator 1,10-phenanthroline inhibits the enzyme activity. In terms of biological role, carboxypeptidase that catalyzes the release of a C-terminal amino acid with specific catalytic activity for aromatic amino acids such as phenylalanine. Is able to degrade ochratoxin A, one of the five major mycotoxins most harmful to humans and animals that is produced by Aspergillus and Penicillium species and occurs in a wide range of agricultural products. The protein is Ochratoxinase of Aspergillus niger (strain ATCC MYA-4892 / CBS 513.88 / FGSC A1513).